The sequence spans 463 residues: Glutamate--tRNA ligase 1 (463 aa).

Positions 10–20 match the 'HIGH' region motif; it reads PSPTGYLHIGG. The short motif at 238 to 242 is the 'KMSKS' region element; sequence KLSKR. Lysine 241 lines the ATP pocket.

Belongs to the class-I aminoacyl-tRNA synthetase family. Glutamate--tRNA ligase type 1 subfamily. In terms of assembly, monomer.

It localises to the cytoplasm. The enzyme catalyses tRNA(Glu) + L-glutamate + ATP = L-glutamyl-tRNA(Glu) + AMP + diphosphate. Catalyzes the attachment of glutamate to tRNA(Glu) in a two-step reaction: glutamate is first activated by ATP to form Glu-AMP and then transferred to the acceptor end of tRNA(Glu). This chain is Glutamate--tRNA ligase 1, found in Helicobacter pylori (strain ATCC 700392 / 26695) (Campylobacter pylori).